A 22-amino-acid chain; its full sequence is uncharacterized protein (22 aa).

A disordered region spans residues 1–22 (MHNSIAYDKDGNSTGQKYYAYG).

This is an uncharacterized protein from Lactobacillus helveticus (Lactobacillus suntoryeus).